A 245-amino-acid polypeptide reads, in one-letter code: 1-(5-phosphoribosyl)-5-[(5-phosphoribosylamino)methylideneamino] imidazole-4-carboxamide isomerase (245 aa).

D8 functions as the Proton acceptor in the catalytic mechanism. The Proton donor role is filled by D130.

It belongs to the HisA/HisF family.

It localises to the cytoplasm. It catalyses the reaction 1-(5-phospho-beta-D-ribosyl)-5-[(5-phospho-beta-D-ribosylamino)methylideneamino]imidazole-4-carboxamide = 5-[(5-phospho-1-deoxy-D-ribulos-1-ylimino)methylamino]-1-(5-phospho-beta-D-ribosyl)imidazole-4-carboxamide. The protein operates within amino-acid biosynthesis; L-histidine biosynthesis; L-histidine from 5-phospho-alpha-D-ribose 1-diphosphate: step 4/9. The sequence is that of 1-(5-phosphoribosyl)-5-[(5-phosphoribosylamino)methylideneamino] imidazole-4-carboxamide isomerase from Pseudomonas syringae pv. tomato (strain ATCC BAA-871 / DC3000).